Consider the following 443-residue polypeptide: Putative type II methyltransferase M.BsuMIIP (443 aa).

The 437-residue stretch at 4–440 (LRVMSLFSGI…QELIHTYVNK (437 aa)) folds into the SAM-dependent MTase C5-type domain. Residue Cys78 is part of the active site.

This sequence belongs to the class I-like SAM-binding methyltransferase superfamily. C5-methyltransferase family.

It catalyses the reaction a 2'-deoxycytidine in DNA + S-adenosyl-L-methionine = a 5-methyl-2'-deoxycytidine in DNA + S-adenosyl-L-homocysteine + H(+). Its function is as follows. A putative methylase, recognizes the double-stranded sequence 5'-GGCC-3', methylates C-?. There is no known cognate restriction enzyme. In Bacillus subtilis (strain 168), this protein is Putative type II methyltransferase M.BsuMIIP (mtbP).